The primary structure comprises 794 residues: Zinc finger protein 148 (794 aa).

Residue Lys-6 forms a Glycyl lysine isopeptide (Lys-Gly) (interchain with G-Cter in SUMO2) linkage. At Ser-51 the chain carries Phosphoserine. Glycyl lysine isopeptide (Lys-Gly) (interchain with G-Cter in SUMO2) cross-links involve residues Lys-88, Lys-115, and Lys-132. The segment at 171 to 193 adopts a C2H2-type 1 zinc-finger fold; that stretch reads HVCEHCNAAFRTNYHLQRHVFIH. Thr-194 carries the phosphothreonine modification. C2H2-type zinc fingers lie at residues 199–221 and 227–249; these read FQCS…EKIH and FRCD…KRTH. Ser-250 carries the phosphoserine modification. The segment at 255-278 adopts a C2H2-type 4 zinc-finger fold; it reads YQCEYCLQYFSRTDRVLKHKRMCH. A Glycyl lysine isopeptide (Lys-Gly) (interchain with G-Cter in SUMO2) cross-link involves residue Lys-291. Positions 298–336 are disordered; it reads EEDSGFSTSPKDNSLPKKKRQKTEKKSSGMDKESALDKS. 2 positions are modified to phosphoserine: Ser-301 and Ser-306. A Glycyl lysine isopeptide (Lys-Gly) (interchain with G-Cter in SUMO2) cross-link involves residue Lys-308. Residues 321–336 show a composition bias toward basic and acidic residues; that stretch reads EKKSSGMDKESALDKS. Residue Lys-356 forms a Glycyl lysine isopeptide (Lys-Gly) (interchain with G-Cter in SUMO1); alternate linkage. Lys-356 participates in a covalent cross-link: Glycyl lysine isopeptide (Lys-Gly) (interchain with G-Cter in SUMO2); alternate. Residue Lys-402 forms a Glycyl lysine isopeptide (Lys-Gly) (interchain with G-Cter in SUMO2) linkage. Ser-412 is modified (phosphoserine). Residues Lys-421 and Lys-424 each participate in a glycyl lysine isopeptide (Lys-Gly) (interchain with G-Cter in SUMO2) cross-link. Over residues 574 to 588 the composition is skewed to polar residues; the sequence is NSSEVPEVTPSENVG. The segment at 574-599 is disordered; sequence NSSEVPEVTPSENVGSSSQASSSDKA. N6-acetyllysine is present on Lys-607. A phosphoserine mark is found at Ser-665 and Ser-784.

This sequence belongs to the krueppel C2H2-type zinc-finger protein family. In terms of assembly, interacts with HNRNPDL. Interacts with the 5FMC complex; the interaction requires association with CHTOP. Interacts with CAVIN1. In terms of processing, sumoylated with SUMO2. Desumoylated by SENP3, resulting in the stimulation of transcription of its target genes.

It localises to the nucleus. In terms of biological role, involved in transcriptional regulation. Represses the transcription of a number of genes including gastrin, stromelysin and enolase. Binds to the G-rich box in the enhancer region of these genes. This chain is Zinc finger protein 148 (ZNF148), found in Pongo abelii (Sumatran orangutan).